The primary structure comprises 375 residues: DNA replication and repair protein RecF (375 aa).

30-37 (GLNGQGKT) is an ATP binding site.

This sequence belongs to the RecF family.

The protein localises to the cytoplasm. Functionally, the RecF protein is involved in DNA metabolism; it is required for DNA replication and normal SOS inducibility. RecF binds preferentially to single-stranded, linear DNA. It also seems to bind ATP. The protein is DNA replication and repair protein RecF of Halothermothrix orenii (strain H 168 / OCM 544 / DSM 9562).